A 106-amino-acid chain; its full sequence is Large ribosomal subunit protein bL21 (106 aa).

The protein belongs to the bacterial ribosomal protein bL21 family. As to quaternary structure, part of the 50S ribosomal subunit. Contacts protein L20.

Functionally, this protein binds to 23S rRNA in the presence of protein L20. The chain is Large ribosomal subunit protein bL21 from Fervidobacterium nodosum (strain ATCC 35602 / DSM 5306 / Rt17-B1).